We begin with the raw amino-acid sequence, 803 residues long: Palmitoyl thioesterase CPT1C (803 aa).

Topologically, residues 1–52 are cytoplasmic; it reads MAEAHQAVGFRPSLTSDGAEVELSAPVLQEIYLSGLRSWKRHLSRFWNDFLT. The chain crosses the membrane as a helical span at residues 53-75; it reads GVFPASPLSWLFLFSAIQLAWFL. Over 76 to 103 the chain is Lumenal; sequence QLDPSLGLMEKIKELLPDWGGQHHGLRG. A helical transmembrane segment spans residues 104 to 126; the sequence is VLAAALFASCLWGALIFTLHVAL. Topologically, residues 127–803 are cytoplasmic; sequence RLLLSYHGWL…SKASMTSTDF (677 aa). His470 acts as the Proton acceptor in catalysis. 552–564 serves as a coordination point for CoA; it reads GKSFIRRCHLSSD. 3 residues coordinate (R)-carnitine: Tyr586, Ser588, and Thr599. Residues 761–803 are required for interaction with GRIA1; sequence LFQAGQHFKRRFRGSGKENSRHRCGFLSRQTGASKASMTSTDF. Residues 772–803 form a disordered region; that stretch reads FRGSGKENSRHRCGFLSRQTGASKASMTSTDF. A compositionally biased stretch (polar residues) spans 788 to 803; that stretch reads SRQTGASKASMTSTDF.

This sequence belongs to the carnitine/choline acetyltransferase family. As to quaternary structure, peripherally associated with AMPAR complex. AMPAR complex consists of an inner core made of 4 pore-forming GluA/GRIA proteins (GRIA1, GRIA2, GRIA3 and GRIA4) and 4 major auxiliary subunits arranged in a twofold symmetry. One of the two pairs of distinct binding sites is occupied either by CNIH2, CNIH3 or CACNG2, CACNG3. The other harbors CACNG2, CACNG3, CACNG4, CACNG8 or GSG1L. This inner core of AMPAR complex is complemented by outer core constituents binding directly to the GluA/GRIA proteins at sites distinct from the interaction sites of the inner core constituents. Outer core constituents include at least PRRT1, PRRT2, CKAMP44/SHISA9, FRRS1L and NRN1. The proteins of the inner and outer core serve as a platform for other, more peripherally associated AMPAR constituents, including CPT1C. Alone or in combination, these auxiliary subunits control the gating and pharmacology of the AMPAR complex and profoundly impact their biogenesis and protein processing. Interacts with SACM1L; the interaction regulates SACM1L phosphatidylinositol-3-phosphatase activity and translocation to endoplasmic reticulum/trans Golgi network in a malonyl-CoA dependent manner. Interacts with ATL1. In terms of tissue distribution, expressed predominantly in brain and testis. Expressed in motor neurons.

It localises to the cell projection. It is found in the dendrite. The protein localises to the axon. Its subcellular location is the endoplasmic reticulum membrane. The catalysed reaction is S-hexadecanoyl-L-cysteinyl-[protein] + H2O = L-cysteinyl-[protein] + hexadecanoate + H(+). Its function is as follows. Palmitoyl thioesterase specifically expressed in the endoplasmic reticulum of neurons. Modulates the trafficking of the glutamate receptor, AMPAR, to plasma membrane through depalmitoylation of GRIA1. Also regulates AMPR trafficking through the regulation of SACM1L phosphatidylinositol-3-phosphatase activity by interaction in a malonyl-CoA dependent manner. Binds malonyl-CoA and couples malonyl-CoA to ceramide levels, necessary for proper spine maturation and contributing to systemic energy homeostasis and appetite control. Binds to palmitoyl-CoA, but does not have carnitine palmitoyltransferase 1 catalytic activity or at very low levels. This chain is Palmitoyl thioesterase CPT1C, found in Homo sapiens (Human).